Here is a 154-residue protein sequence, read N- to C-terminus: UPF0225 protein YpsIP31758_1970 (154 aa).

Belongs to the UPF0225 family.

This is UPF0225 protein YpsIP31758_1970 from Yersinia pseudotuberculosis serotype O:1b (strain IP 31758).